We begin with the raw amino-acid sequence, 380 residues long: Septin homolog spn6 (380 aa).

A Septin-type G domain is found at 27–297 (KECGLTIMLC…ERYRREQLTN (271 aa)). Positions 37–44 (GASGTGKT) are G1 motif. GTP-binding positions include 37–44 (GASGTGKT), Thr72, Gly98, 177–185 (KADTFTTPE), and Arg246. Residues 95 to 98 (DTPG) are G3 motif. Residues 176–179 (AKAD) form a G4 motif region. Positions 304-380 (KLKKEHYERL…KSYKGRGHKK (77 aa)) form a coiled coil.

It belongs to the TRAFAC class TrmE-Era-EngA-EngB-Septin-like GTPase superfamily. Septin GTPase family. As to quaternary structure, component of the sporulation-specific septin complex composed of at least spn2, spn5, spn6 and spn7.

It localises to the cytoplasm. The protein localises to the forespore membrane. Its function is as follows. Septin-like protein involved in the correct orientation of forespore membrane extension during sporulation. This chain is Septin homolog spn6 (spn6), found in Schizosaccharomyces pombe (strain 972 / ATCC 24843) (Fission yeast).